We begin with the raw amino-acid sequence, 80 residues long: CLAVATA3/ESR (CLE)-related protein 14 (80 aa).

Residues Met1–Ala26 form the signal peptide. Hydroxyproline is present on residues Pro71 and Pro74. O-linked (Ara...) hydroxyproline glycosylation is present at Pro74.

The protein belongs to the CLV3/ESR signal peptide family. In terms of assembly, interacts with the extracellular leucine-rich repeat region of CLV2 and PEPR2. In terms of processing, the O-glycosylation (arabinosylation) of the hydroxyproline Pro-74 enhances binding affinity of the CLE14p peptide for its receptor. In terms of tissue distribution, mostly expressed in roots, and, to a lower extent, in seedlings and leaves. Expressed in the primary root tip under Pi deficiency.

Its subcellular location is the secreted. It localises to the extracellular space. Its function is as follows. Extracellular signal peptide that regulates cell fate. Represses root apical meristem maintenance. Acts as an elicitor of the root meristem differentiation through the CLV2/CRN complex signaling pathway. Inhibits irreversibly root growth by reducing cell division rates in the root apical meristem. Regulates the transition of protophloem cells from proliferation to differentiation, thus impinging on postembryonic growth capacity of the root meristem; this signaling pathway requires CRN and CLV2. In Arabidopsis thaliana (Mouse-ear cress), this protein is CLAVATA3/ESR (CLE)-related protein 14.